The sequence spans 177 residues: Adenine phosphoribosyltransferase (177 aa).

The protein belongs to the purine/pyrimidine phosphoribosyltransferase family. As to quaternary structure, homodimer.

The protein localises to the cytoplasm. It catalyses the reaction AMP + diphosphate = 5-phospho-alpha-D-ribose 1-diphosphate + adenine. The protein operates within purine metabolism; AMP biosynthesis via salvage pathway; AMP from adenine: step 1/1. Catalyzes a salvage reaction resulting in the formation of AMP, that is energically less costly than de novo synthesis. In Chlorobaculum tepidum (strain ATCC 49652 / DSM 12025 / NBRC 103806 / TLS) (Chlorobium tepidum), this protein is Adenine phosphoribosyltransferase.